A 510-amino-acid chain; its full sequence is Ribonuclease Y (510 aa).

Residues 4 to 24 (LLWAVVALLAGLAGGAGIGVY) traverse the membrane as a helical segment. In terms of domain architecture, KH spans 200–260 (TVSTVNLPSE…VRREVARVAL (61 aa)). The HD domain maps to 326-419 (VLQHSLECAL…VIAADAISGA (94 aa)).

This sequence belongs to the RNase Y family.

Its subcellular location is the cell membrane. In terms of biological role, endoribonuclease that initiates mRNA decay. The polypeptide is Ribonuclease Y (Chloroflexus aurantiacus (strain ATCC 29366 / DSM 635 / J-10-fl)).